Here is a 434-residue protein sequence, read N- to C-terminus: Innexin-14 (434 aa).

4 helical membrane-spanning segments follow: residues 30–50 (LFTVYLLGFFVLLTGAKQHFG), 106–126 (WVPFFFAFQVCCFLLPFWCWA), 301–321 (IFIGLYFWLLVLTALSVIGTV), and 365–385 (YLCADGILLIYFMMDTNGFLK).

The protein belongs to the pannexin family.

The protein resides in the cell membrane. Its subcellular location is the cell junction. The protein localises to the gap junction. Functionally, structural component of the gap junctions. The protein is Innexin-14 (inx-14) of Caenorhabditis elegans.